A 77-amino-acid polypeptide reads, in one-letter code: Ubiquitin-like protein NEDD8 (77 aa).

The interval Val-70–Ala-72 is interaction with uba-3. Gly-76 is covalently cross-linked (Glycyl lysine isopeptide (Gly-Lys) (interchain with K-? in acceptor proteins)). Residue Phe-77 is a propeptide.

The protein belongs to the ubiquitin family. As to quaternary structure, interacts with dcn-1. Covalently attached to cullins. May interact with atx-3. Post-translationally, cleavage of precursor form is necessary for function.

The protein resides in the nucleus. Its subcellular location is the cytoplasm. Its function is as follows. Ubiquitin-like protein which plays an important role in cell cycle control and embryogenesis. Covalent attachment to its substrates requires prior activation by the E1 complex uba-3-ula-1 and linkage to the E2 enzyme ubc-12. Attachment of ned-8 to cullins activates their associated E3 ubiquitin ligase activity, and thus promotes polyubiquitination and proteasomal degradation of cyclins and other regulatory proteins. The chain is Ubiquitin-like protein NEDD8 (ned-8) from Caenorhabditis elegans.